Here is a 332-residue protein sequence, read N- to C-terminus: uncharacterized protein (332 aa).

A helical transmembrane segment spans residues 185–205 (MVYGYSVFNAFFILLALPNVI).

It localises to the host membrane. This is an uncharacterized protein from Sulfolobus islandicus filamentous virus (isolate Iceland/Hveragerdi) (SIFV).